Consider the following 419-residue polypeptide: Serine hydroxymethyltransferase 2 (419 aa).

(6S)-5,6,7,8-tetrahydrofolate-binding positions include Leu120 and 124 to 126 (GHL). Lys229 carries the N6-(pyridoxal phosphate)lysine modification.

Belongs to the SHMT family. As to quaternary structure, homodimer. It depends on pyridoxal 5'-phosphate as a cofactor.

It localises to the cytoplasm. The catalysed reaction is (6R)-5,10-methylene-5,6,7,8-tetrahydrofolate + glycine + H2O = (6S)-5,6,7,8-tetrahydrofolate + L-serine. Its pathway is one-carbon metabolism; tetrahydrofolate interconversion. It functions in the pathway amino-acid biosynthesis; glycine biosynthesis; glycine from L-serine: step 1/1. Its function is as follows. Catalyzes the reversible interconversion of serine and glycine with tetrahydrofolate (THF) serving as the one-carbon carrier. This reaction serves as the major source of one-carbon groups required for the biosynthesis of purines, thymidylate, methionine, and other important biomolecules. Also exhibits THF-independent aldolase activity toward beta-hydroxyamino acids, producing glycine and aldehydes, via a retro-aldol mechanism. The polypeptide is Serine hydroxymethyltransferase 2 (Salmonella typhi).